A 392-amino-acid polypeptide reads, in one-letter code: Bifunctional enzyme Fae/Hps (392 aa).

Residues 1–161 (MFLVGEALIG…YEKERSVHPV (161 aa)) are formaldehyde-activating enzyme. Catalysis depends on histidine 17, which acts as the Proton donor. Residues aspartate 19, leucine 48, lysine 66, threonine 68, and glutamine 83 each coordinate substrate. Positions 162 to 392 (MGYRVMRLWD…IDQYRIMTDF (231 aa)) are 3-hexulose-6-phosphate synthase.

In the N-terminal section; belongs to the formaldehyde-activating enzyme family. The protein in the C-terminal section; belongs to the HPS/KGPDC family. HPS subfamily.

It catalyses the reaction 5,6,7,8-tetrahydromethanopterin + formaldehyde = 5,10-methylenetetrahydromethanopterin + H2O. It carries out the reaction D-ribulose 5-phosphate + formaldehyde = D-arabino-hex-3-ulose 6-phosphate. Its pathway is carbohydrate biosynthesis; D-ribose 5-phosphate biosynthesis. In terms of biological role, catalyzes the condensation of formaldehyde with tetrahydromethanopterin (H(4)MPT) to 5,10-methylenetetrahydromethanopterin. Catalyzes the reversible formation of ribulose-5-phosphate and formaldehyde from 3-hexulose-6-phosphate. This Methanothrix thermoacetophila (strain DSM 6194 / JCM 14653 / NBRC 101360 / PT) (Methanosaeta thermophila) protein is Bifunctional enzyme Fae/Hps.